The chain runs to 481 residues: Glutamyl-tRNA(Gln) amidotransferase subunit A (481 aa).

Active-site charge relay system residues include lysine 76 and serine 151. The Acyl-ester intermediate role is filled by serine 175.

The protein belongs to the amidase family. GatA subfamily. Heterotrimer of A, B and C subunits.

The enzyme catalyses L-glutamyl-tRNA(Gln) + L-glutamine + ATP + H2O = L-glutaminyl-tRNA(Gln) + L-glutamate + ADP + phosphate + H(+). In terms of biological role, allows the formation of correctly charged Gln-tRNA(Gln) through the transamidation of misacylated Glu-tRNA(Gln) in organisms which lack glutaminyl-tRNA synthetase. The reaction takes place in the presence of glutamine and ATP through an activated gamma-phospho-Glu-tRNA(Gln). In Neisseria gonorrhoeae (strain ATCC 700825 / FA 1090), this protein is Glutamyl-tRNA(Gln) amidotransferase subunit A.